The chain runs to 309 residues: Dicarboxylate carrier UCP2 (309 aa).

The Mitochondrial intermembrane portion of the chain corresponds to Met-1 to Lys-16. Solcar repeat units follow at residues Pro-11–Phe-106, Ala-114–Thr-203, and Asp-212–Ala-297. Residues Lys-16–Leu-63 form an important for interaction with long-chain fatty acids region. The helical transmembrane segment at Phe-17–Arg-40 threads the bilayer. Over Leu-41–Ser-77 the chain is Mitochondrial matrix. Residues Leu-78 to Val-103 traverse the membrane as a helical segment. Residues Lys-104–Arg-119 are Mitochondrial intermembrane-facing. The helical transmembrane segment at Leu-120–Gln-145 threads the bilayer. The Mitochondrial matrix segment spans residues Ala-146–Arg-173. The chain crosses the membrane as a helical span at residues Gly-174–Leu-199. Over Ile-200–His-217 the chain is Mitochondrial intermembrane. The chain crosses the membrane as a helical span at residues Phe-218–Tyr-242. Topologically, residues Met-243–Ala-268 are mitochondrial matrix. The helical transmembrane segment at Phe-269–Leu-294 threads the bilayer. The tract at residues Leu-278–Val-285 is important for interaction with long-chain fatty acids. Over Lys-295–Phe-309 the chain is Mitochondrial intermembrane.

This sequence belongs to the mitochondrial carrier (TC 2.A.29) family. Homotetramer. Adopts an asymmetrical dimer of dimers functional form. Interacts with MICU1 (when methylated); leading to decrease the calcium sensitivity of MICU1. Expressed in a variety of organs, with predominant expression in the heart, lung and spleen.

Its subcellular location is the mitochondrion inner membrane. The catalysed reaction is L-aspartate(out) + phosphate(in) + H(+)(in) = L-aspartate(in) + phosphate(out) + H(+)(out). It carries out the reaction oxaloacetate(out) + phosphate(in) + H(+)(in) = oxaloacetate(in) + phosphate(out) + H(+)(out). It catalyses the reaction (S)-malate(out) + phosphate(in) + H(+)(in) = (S)-malate(in) + phosphate(out) + H(+)(out). The enzyme catalyses malonate(out) + phosphate(in) + H(+)(in) = malonate(in) + phosphate(out) + H(+)(out). The catalysed reaction is sulfate(out) + phosphate(in) + H(+)(in) = sulfate(in) + phosphate(out) + H(+)(out). It carries out the reaction (S)-malate(out) = (S)-malate(in). It catalyses the reaction L-aspartate(out) = L-aspartate(in). The enzyme catalyses phosphate(in) = phosphate(out). The catalysed reaction is chloride(in) = chloride(out). It carries out the reaction H(+)(in) = H(+)(out). It catalyses the reaction a long-chain fatty acid(out) = a long-chain fatty acid(in). Functionally, antiporter that exports dicarboxylate intermediates of the Krebs cycle in exchange for phosphate plus a proton across the inner membrane of mitochondria, a process driven by mitochondrial motive force with an overall impact on glycolysis, glutaminolysis and glutathione-dependent redox balance. Continuous export of oxaloacetate and related four-carbon dicarboxylates from mitochondrial matrix into the cytosol negatively regulates the oxidation of acetyl-CoA substrates via the Krebs cycle lowering the ATP/ADP ratio and reactive oxygen species (ROS) production. May mediate inducible proton entry into the mitochondrial matrix affecting ATP turnover as a protection mechanism against oxidative stress. The proton currents are most likely associated with fatty acid flipping across the inner membrane of mitochondria in a metabolic process regulated by free fatty acids and purine nucleotides. Regulates the use of glucose as a source of energy. Required for glucose-induced DRP1-dependent mitochondrial fission and neuron activation in the ventromedial nucleus of the hypothalamus (VMH). This mitochondrial adaptation mechanism modulates the VMH pool of glucose-excited neurons with an impact on systemic glucose homeostasis. Regulates ROS levels and metabolic reprogramming of macrophages during the resolution phase of inflammation. Attenuates ROS production in response to IL33 to preserve the integrity of the Krebs cycle required for persistent production of itaconate and subsequent GATA3-dependent differentiation of inflammation-resolving alternatively activated macrophages. Can unidirectionally transport anions including L-malate, L-aspartate, phosphate and chloride ions. Does not mediate adaptive thermogenesis. The chain is Dicarboxylate carrier UCP2 (Ucp2) from Rattus norvegicus (Rat).